We begin with the raw amino-acid sequence, 166 residues long: CDP-archaeol synthase (166 aa).

Helical transmembrane passes span L42–A62, V73–V93, A103–I123, and F128–L148.

This sequence belongs to the CDP-archaeol synthase family. The cofactor is Mg(2+).

The protein localises to the cell membrane. It catalyses the reaction 2,3-bis-O-(geranylgeranyl)-sn-glycerol 1-phosphate + CTP + H(+) = CDP-2,3-bis-O-(geranylgeranyl)-sn-glycerol + diphosphate. It functions in the pathway membrane lipid metabolism; glycerophospholipid metabolism. Catalyzes the formation of CDP-2,3-bis-(O-geranylgeranyl)-sn-glycerol (CDP-archaeol) from 2,3-bis-(O-geranylgeranyl)-sn-glycerol 1-phosphate (DGGGP) and CTP. This reaction is the third ether-bond-formation step in the biosynthesis of archaeal membrane lipids. This is CDP-archaeol synthase from Methanosphaerula palustris (strain ATCC BAA-1556 / DSM 19958 / E1-9c).